The following is an 807-amino-acid chain: Nucleolar complex protein 3 homolog (807 aa).

Disordered stretches follow at residues 27–93 (KLKN…DMMD) and 167–191 (EKPVTDVQQEEEAEEELEDEEEVIE). Positions 40–51 (KKYRKEQRKLRQ) are enriched in basic residues. Over residues 52 to 78 (AVKDAVSKKPIPLEDPKSKRPVKRMER) the composition is skewed to basic and acidic residues. Acidic residues-rich tracts occupy residues 79–93 (EEDEEEEALPLDMMD) and 174–190 (QQEEEAEEELEDEEEVI). A Glycyl lysine isopeptide (Lys-Gly) (interchain with G-Cter in SUMO2) cross-link involves residue Lys-332. A coiled-coil region spans residues 449–489 (FKEKRKTLSRMQRKWKKAEEKLERELREAEASESTEKKLKL).

It belongs to the CBF/MAK21 family.

The protein resides in the nucleus. The protein localises to the nucleolus. Its subcellular location is the nucleus speckle. Functionally, may be required for adipogenesis. This chain is Nucleolar complex protein 3 homolog (Noc3l), found in Mus musculus (Mouse).